A 251-amino-acid chain; its full sequence is Protein CMS1 (251 aa).

Positions 1-37 are disordered; sequence MSLDNDINTKKRKLQDDEKPRKKRKHKRPTRDDDADL.

Belongs to the CMS1 family.

It is found in the nucleus. May play a role in the regulation of DNA replication and cell cycle control. In Chaetomium thermophilum (strain DSM 1495 / CBS 144.50 / IMI 039719) (Thermochaetoides thermophila), this protein is Protein CMS1 (CSM1).